We begin with the raw amino-acid sequence, 544 residues long: Cytochrome P450 monooxygenase verL (544 aa).

Residues 3-23 traverse the membrane as a helical segment; sequence VALFPILPIGCLLIYIIFKLW. Cysteine 446 is a heme binding site. Residues 520–544 are disordered; the sequence is QEKGIDGWKGKKESSSEENRGVSSR.

Belongs to the cytochrome P450 family. Requires heme as cofactor.

The protein localises to the membrane. It participates in mycotoxin biosynthesis. Cytochrome P450 monooxygenase; part of the gene cluster that mediates the biosynthesis of 11'-deoxyverticillin A, one of the dimeric epipolythiodioxopiperazines (ETPs) from the verticillin family that act as mycotoxins. 11'-deoxyverticillin A is required for normal conidiation. The nonribosomal peptide synthetase verP is speculated to be responsible for condensation of amino acids to form the carbon skeleton of verticillin, whereas the cluster-specific tailoring enzymes are involved in further modifications leading to the production of 11'-deoxyverticillin A. The sequence is that of Cytochrome P450 monooxygenase verL from Clonostachys rogersoniana.